We begin with the raw amino-acid sequence, 292 residues long: MAPAVLKTVADVKDWTAGLRREGHRLALVPTMGFLHEGHLSLIREGRRRADVVAVSIFVNPTQFGPKEDLSRYPRDFEGDVAKCISAGAQAIFAPAGPEVMYPQGYQTYVEVTDVSQGLCGARRPGHFRGVATVVTKLLTLFRPEVALFGEKDYQQLQVIRALNQDLHLGADIVGMPTVREPDGLAMSSRNAYLSPEERQRALALSRGLKAAQALLREGTRESEPLVAAVRRELEAAGLREDYVELVDAERLTPLASVAPGQPARLLVAAFSGTTRLIDNMQLGGEENAGRV.

Residue 32 to 39 (MGFLHEGH) coordinates ATP. Residue histidine 39 is the Proton donor of the active site. Glutamine 63 serves as a coordination point for (R)-pantoate. Glutamine 63 is a binding site for beta-alanine. 150–153 (GEKD) is an ATP binding site. Glutamine 156 provides a ligand contact to (R)-pantoate. ATP-binding positions include valine 179 and 187-190 (MSSR).

It belongs to the pantothenate synthetase family. Homodimer.

The protein localises to the cytoplasm. The catalysed reaction is (R)-pantoate + beta-alanine + ATP = (R)-pantothenate + AMP + diphosphate + H(+). It participates in cofactor biosynthesis; (R)-pantothenate biosynthesis; (R)-pantothenate from (R)-pantoate and beta-alanine: step 1/1. Functionally, catalyzes the condensation of pantoate with beta-alanine in an ATP-dependent reaction via a pantoyl-adenylate intermediate. This Myxococcus xanthus (strain DK1622) protein is Pantothenate synthetase.